The chain runs to 136 residues: ATP synthase epsilon chain (136 aa).

The interval 106-136 is disordered; sequence MEGQPSSPEKLKAQQQLNEARARLQASKTAD.

Belongs to the ATPase epsilon chain family. F-type ATPases have 2 components, CF(1) - the catalytic core - and CF(0) - the membrane proton channel. CF(1) has five subunits: alpha(3), beta(3), gamma(1), delta(1), epsilon(1). CF(0) has three main subunits: a, b and c.

It localises to the cellular thylakoid membrane. Produces ATP from ADP in the presence of a proton gradient across the membrane. The chain is ATP synthase epsilon chain from Synechococcus sp. (strain CC9605).